The following is a 372-amino-acid chain: Cell division protein FtsZ 1 (372 aa).

GTP-binding positions include 51–55 (GAGCN), 138–140 (GTG), glutamate 169, arginine 173, and aspartate 216. A disordered region spans residues 351–372 (QEETPEPSEEEVPPVKIDIPEL). Positions 353 to 362 (ETPEPSEEEV) are enriched in acidic residues.

This sequence belongs to the FtsZ family. Homodimer. Polymerizes to form a dynamic ring structure in a strictly GTP-dependent manner. Interacts directly with several other division proteins.

The protein resides in the cytoplasm. Functionally, essential cell division protein that forms a contractile ring structure (Z ring) at the future cell division site. The regulation of the ring assembly controls the timing and the location of cell division. One of the functions of the FtsZ ring is to recruit other cell division proteins to the septum to produce a new cell wall between the dividing cells. Binds GTP and shows GTPase activity. This is Cell division protein FtsZ 1 from Pyrococcus abyssi (strain GE5 / Orsay).